The sequence spans 505 residues: Aminoaldehyde dehydrogenase 1a (505 aa).

Asp101 contributes to the Na(+) binding site. NAD(+) contacts are provided by residues Thr161–Trp163 and Lys187–Glu190. Na(+) is bound at residue Leu191. NAD(+)-binding positions include Ser241 to Thr244 and Glu262. The active-site Proton acceptor is Glu262. Residue Cys296 is the Nucleophile of the active site. Positions 395 and 461 each coordinate NAD(+).

This sequence belongs to the aldehyde dehydrogenase family. As to quaternary structure, forms homodimers.

The catalysed reaction is 4-aminobutanal + NAD(+) + H2O = 4-aminobutanoate + NADH + 2 H(+). It catalyses the reaction 3-aminopropanal + NAD(+) + H2O = beta-alanine + NADH + 2 H(+). It carries out the reaction 4-(trimethylamino)butanal + NAD(+) + H2O = 4-(trimethylamino)butanoate + NADH + 2 H(+). The enzyme catalyses 4-guanidinobutanal + NAD(+) + H2O = 4-guanidinobutanoate + NADH + 2 H(+). The catalysed reaction is betaine aldehyde + NAD(+) + H2O = glycine betaine + NADH + 2 H(+). It participates in amine and polyamine biosynthesis; betaine biosynthesis via choline pathway; betaine from betaine aldehyde: step 1/1. Its function is as follows. Dehydrogenase that catalyzes the oxidation of several aminoaldehydes. Metabolizes and detoxifies aldehyde products of polyamine degradation to non-toxic amino acids. Catalyzes the oxidation of 4-aminobutanal and 3-aminopropanal to 4-aminobutanoate and beta-alanine, respectively. Catalyzes the oxidation of 4-(trimethylamino)butanal and 4-guanidinobutanal to 4-trimethylammoniobutanoate and 4-guanidinobutanoate, respectively. Catalyzes the oxidation of betaine aldehyde to glycine betaine. Dehydrogenase that catalyzes the oxidation of several aminoaldehydes. Catalyzes the oxidation of betaine aldehyde to glycine betaine. Catalyzes the oxidation of 4-(trimethylamino)butanal to 4-trimethylammoniobutanoate. This Zea mays (Maize) protein is Aminoaldehyde dehydrogenase 1a.